The following is a 381-amino-acid chain: MIKKIIFTVTPIFSIPPRGAAAVETWIYQVAKRLSIPNAIACIKNAGYPEYNKINDNCDIHYIGFSKVYKRLFQKWTRLDPLPYSQRILNIRDKVTTQEDSVIVIHNSMKLYRQIRERNPNAKLVMHMHNAFEPELPDNDAKIIVPSQFLKAFYEERLPAAAVSIVPNGFCAETYKRNPQDNLRQQLNIAEDATVLLYAGRISPDKGILLLLQAFKQLRTLRSNIKLVVVGDPYASRKGEKAEYQKKVLDAAKEIGTDCIMAGGQSPDQMHNFYHIADLVIVPSQVEEAFCMVAVEAMAAGKAVLASKKGGISEFVLDGITGYHLAEPMSSDSIINDINRALADKERHQIAEKAKSLVFSKYSWENVAQRFEEQMKNWFDK.

The protein belongs to the glycosyltransferase group 1 family. Glycosyltransferase 4 subfamily.

The protein resides in the cell inner membrane. The enzyme catalyses UDP-N-acetyl-alpha-D-glucosamine + [lipopolysaccharide] = UDP + N-acetyl-alpha-D-glucosaminyl-[lipopolysaccharide].. Its pathway is bacterial outer membrane biogenesis; LPS core biosynthesis. Transferase involved in the biosynthesis of the core oligosaccharide region of lipopolysaccharide (LPS). Catalyzes the addition of the terminal N-acetyl-D-glucosamine (GlcNAc) group to the outer-core glucose II, the last step of the lipid A-core oligosaccharide biosynthesis. In Salmonella typhimurium (strain LT2 / SGSC1412 / ATCC 700720), this protein is Lipopolysaccharide 1,2-N-acetylglucosaminetransferase.